A 34-amino-acid polypeptide reads, in one-letter code: Mytilin-B (34 aa).

Cystine bridges form between Cys2–Cys27, Cys6–Cys29, Cys10–Cys31, and Cys15–Cys34.

Its subcellular location is the secreted. Functionally, has antibacterial and antiviral activity. The protein is Mytilin-B of Mytilus edulis (Blue mussel).